A 188-amino-acid polypeptide reads, in one-letter code: Peptidyl-tRNA hydrolase (188 aa).

Tyrosine 16 is a binding site for tRNA. The active-site Proton acceptor is histidine 21. TRNA is bound by residues phenylalanine 66, asparagine 68, and asparagine 114.

Belongs to the PTH family. As to quaternary structure, monomer.

It localises to the cytoplasm. It catalyses the reaction an N-acyl-L-alpha-aminoacyl-tRNA + H2O = an N-acyl-L-amino acid + a tRNA + H(+). In terms of biological role, hydrolyzes ribosome-free peptidyl-tRNAs (with 1 or more amino acids incorporated), which drop off the ribosome during protein synthesis, or as a result of ribosome stalling. Its function is as follows. Catalyzes the release of premature peptidyl moieties from peptidyl-tRNA molecules trapped in stalled 50S ribosomal subunits, and thus maintains levels of free tRNAs and 50S ribosomes. This chain is Peptidyl-tRNA hydrolase, found in Geobacter sp. (strain M21).